The chain runs to 171 residues: Neuronal vesicle trafficking-associated protein 2 (171 aa).

Residues 1 to 10 (MVKLNSNPSE) show a composition bias toward polar residues. A disordered region spans residues 1–21 (MVKLNSNPSEKGTKPPSVEDG). The Cytoplasmic segment spans residues 1–71 (MVKLNSNPSE…FRVPKIAEFT (71 aa)). Residues 72–92 (VTILVSLALAFLACIVFLVVY) form a helical; Signal-anchor for type II membrane protein membrane-spanning segment. Topologically, residues 93–171 (KAFTYDHSCP…EPKPPKTQGH (79 aa)) are lumenal.

It belongs to the NSG family.

Its subcellular location is the membrane. The protein resides in the golgi apparatus. The protein localises to the trans-Golgi network membrane. It is found in the cell projection. It localises to the dendrite. Its subcellular location is the endosome membrane. The protein resides in the early endosome membrane. The protein localises to the late endosome membrane. It is found in the lysosome lumen. It localises to the cytoplasmic vesicle membrane. Its subcellular location is the golgi stack membrane. The protein resides in the endosome. The protein localises to the multivesicular body membrane. This Homo sapiens (Human) protein is Neuronal vesicle trafficking-associated protein 2.